The primary structure comprises 487 residues: Cysteine--tRNA ligase (487 aa).

Cys29 lines the Zn(2+) pocket. The short motif at 31–41 (VTVYDFCHIGH) is the 'HIGH' region element. Zn(2+)-binding residues include Cys209, His234, and Glu238. The 'KMSKS' region signature appears at 266–270 (KMSKS). Lys269 provides a ligand contact to ATP.

Belongs to the class-I aminoacyl-tRNA synthetase family. As to quaternary structure, monomer. Requires Zn(2+) as cofactor.

Its subcellular location is the cytoplasm. The enzyme catalyses tRNA(Cys) + L-cysteine + ATP = L-cysteinyl-tRNA(Cys) + AMP + diphosphate. This is Cysteine--tRNA ligase from Trichlorobacter lovleyi (strain ATCC BAA-1151 / DSM 17278 / SZ) (Geobacter lovleyi).